The primary structure comprises 541 residues: ATP synthase subunit alpha (541 aa).

Position 169–176 (169–176 (GDRQTGKT)) interacts with ATP. A disordered region spans residues 506-541 (NTLLNVEEGDTGEEENNEGHNKAEQDTEEKDTEEVV). Acidic residues-rich tracts occupy residues 512-521 (EEGDTGEEEN) and 531-541 (DTEEKDTEEVV).

It belongs to the ATPase alpha/beta chains family. As to quaternary structure, F-type ATPases have 2 components, CF(1) - the catalytic core - and CF(0) - the membrane proton channel. CF(1) has five subunits: alpha(3), beta(3), gamma(1), delta(1), epsilon(1). CF(0) has three main subunits: a(1), b(2) and c(9-12). The alpha and beta chains form an alternating ring which encloses part of the gamma chain. CF(1) is attached to CF(0) by a central stalk formed by the gamma and epsilon chains, while a peripheral stalk is formed by the delta and b chains.

Its subcellular location is the cell inner membrane. It carries out the reaction ATP + H2O + 4 H(+)(in) = ADP + phosphate + 5 H(+)(out). Produces ATP from ADP in the presence of a proton gradient across the membrane. The alpha chain is a regulatory subunit. This chain is ATP synthase subunit alpha, found in Halothermothrix orenii (strain H 168 / OCM 544 / DSM 9562).